We begin with the raw amino-acid sequence, 211 residues long: Dof zinc finger protein 5 (211 aa).

The disordered stretch occupies residues 37–101; sequence FVVAREKVEP…QRRLQDSAEA (65 aa). Positions 68–80 are enriched in basic and acidic residues; sequence IKREAADRDEEQR. The Dof-type zinc-finger motif lies at 109-163; sequence LPCPRCRSRDTKFCYFNNYNVNQPRHFCKACHRYWTAGGALRNVPVGAGRRKNRP. Cysteine 111, cysteine 114, cysteine 136, and cysteine 139 together coordinate Zn(2+). The disordered stretch occupies residues 191–211; that stretch reads SPTSPSPVYTDRWPVTPDRPF.

It localises to the nucleus. In terms of biological role, transcription factor that may transactivate seed storage protein genes in developing seeds. The sequence is that of Dof zinc finger protein 5 from Oryza sativa subsp. japonica (Rice).